The primary structure comprises 353 residues: Photosystem II D2 protein (353 aa).

Position 2 is an N-acetylthreonine (Thr-2). Residue Thr-2 is modified to Phosphothreonine. Residues 41-61 traverse the membrane as a helical segment; the sequence is CAYFAVGGWFTGTTFVTSWYT. His-118 contacts chlorophyll a. The chain crosses the membrane as a helical span at residues 125 to 141; it reads GFMLRQFELARSVQLRP. Gln-130 and Asn-143 together coordinate pheophytin a. Residues 153–166 form a helical membrane-spanning segment; it reads VFVSVFLIYPLGQS. A chlorophyll a-binding site is contributed by His-198. A helical membrane pass occupies residues 208–228; it reads AALLCAIHGATVENTLFEDGD. Positions 215 and 262 each coordinate a plastoquinone. Residue His-215 participates in Fe cation binding. Residue His-269 participates in Fe cation binding. The helical transmembrane segment at 279 to 295 threads the bilayer; that stretch reads GLWMSALGVVGLALNLR.

The protein belongs to the reaction center PufL/M/PsbA/D family. PSII is composed of 1 copy each of membrane proteins PsbA, PsbB, PsbC, PsbD, PsbE, PsbF, PsbH, PsbI, PsbJ, PsbK, PsbL, PsbM, PsbT, PsbX, PsbY, PsbZ, Psb30/Ycf12, at least 3 peripheral proteins of the oxygen-evolving complex and a large number of cofactors. It forms dimeric complexes. The D1/D2 heterodimer binds P680, chlorophylls that are the primary electron donor of PSII, and subsequent electron acceptors. It shares a non-heme iron and each subunit binds pheophytin, quinone, additional chlorophylls, carotenoids and lipids. There is also a Cl(-1) ion associated with D1 and D2, which is required for oxygen evolution. The PSII complex binds additional chlorophylls, carotenoids and specific lipids. serves as cofactor.

The protein resides in the plastid. Its subcellular location is the chloroplast thylakoid membrane. It catalyses the reaction 2 a plastoquinone + 4 hnu + 2 H2O = 2 a plastoquinol + O2. Photosystem II (PSII) is a light-driven water:plastoquinone oxidoreductase that uses light energy to abstract electrons from H(2)O, generating O(2) and a proton gradient subsequently used for ATP formation. It consists of a core antenna complex that captures photons, and an electron transfer chain that converts photonic excitation into a charge separation. The D1/D2 (PsbA/PsbD) reaction center heterodimer binds P680, the primary electron donor of PSII as well as several subsequent electron acceptors. D2 is needed for assembly of a stable PSII complex. The protein is Photosystem II D2 protein of Atropa belladonna (Belladonna).